The sequence spans 218 residues: Protein GrpE (218 aa).

Residues 1 to 10 are compositionally biased toward polar residues; sequence MSGEASTPAQ. Disordered stretches follow at residues 1–44 and 198–218; these read MSGE…DPAE and SMGP…AEDS. Low complexity predominate over residues 200–218; it reads GPGPSADAEGAASAEAEDS.

It belongs to the GrpE family. Homodimer.

It localises to the cytoplasm. Its function is as follows. Participates actively in the response to hyperosmotic and heat shock by preventing the aggregation of stress-denatured proteins, in association with DnaK and GrpE. It is the nucleotide exchange factor for DnaK and may function as a thermosensor. Unfolded proteins bind initially to DnaJ; upon interaction with the DnaJ-bound protein, DnaK hydrolyzes its bound ATP, resulting in the formation of a stable complex. GrpE releases ADP from DnaK; ATP binding to DnaK triggers the release of the substrate protein, thus completing the reaction cycle. Several rounds of ATP-dependent interactions between DnaJ, DnaK and GrpE are required for fully efficient folding. This is Protein GrpE from Parasynechococcus marenigrum (strain WH8102).